A 156-amino-acid polypeptide reads, in one-letter code: Acyl carrier protein, mitochondrial (156 aa).

A mitochondrion-targeting transit peptide spans methionine 1–tyrosine 68. The Carrier domain maps to glutamate 77–lysine 152. Lysine 88 is modified (N6-acetyllysine). The residue at position 112 (serine 112) is an O-(pantetheine 4'-phosphoryl)serine.

This sequence belongs to the acyl carrier protein (ACP) family. Mammalian complex I is composed of 45 different subunits. Interacts with ETFRF1. Identified in a complex composed of MALSU1, MIEF1 upstream open reading frame protein and NDUFAB1; within the trimeric complex, MIEF1 upstream open reading frame protein functions as a bridging scaffold that interacts with MALSU1 on one side, and with NDUFAB1 on the other side. The complex interacts with the mitochondrial large ribosomal subunit. Interacts with alpha-1-microglobulin chain; this interaction is required for the maintenance of mitochondrial redox homeostasis. Component of the mitochondrial core iron-sulfur cluster (ISC) complex composed of NFS1, LYRM4, NDUFAB1, ISCU, FXN, and FDX2; this complex is a heterohexamer containing two copies of each monomer. Component of the cyteine desulfurase complex composed of NFS1, LYRM4 and NDUFAB1; this complex contributes to the stability and cysteine desulfurase activity of NFS1. In terms of processing, phosphopantetheinylation at Ser-112 is essential for interactions with LYR motif-containing proteins.

The protein localises to the mitochondrion. In terms of biological role, carrier of the growing fatty acid chain in fatty acid biosynthesis. Accessory and non-catalytic subunit of the mitochondrial membrane respiratory chain NADH dehydrogenase (Complex I), which functions in the transfer of electrons from NADH to the respiratory chain. Accessory protein, of the core iron-sulfur cluster (ISC) assembly complex, that regulates, in association with LYRM4, the stability and the cysteine desulfurase activity of NFS1 and participates in the [2Fe-2S] clusters assembly on the scaffolding protein ISCU. The core iron-sulfur cluster (ISC) assembly complex is involved in the de novo synthesis of a [2Fe-2S] cluster, the first step of the mitochondrial iron-sulfur protein biogenesis. This process is initiated by the cysteine desulfurase complex (NFS1:LYRM4:NDUFAB1) that produces persulfide which is delivered on the scaffold protein ISCU in a FXN-dependent manner. Then this complex is stabilized by FDX2 which provides reducing equivalents to accomplish the [2Fe-2S] cluster assembly. Finally, the [2Fe-2S] cluster is transferred from ISCU to chaperone proteins, including HSCB, HSPA9 and GLRX5. The protein is Acyl carrier protein, mitochondrial of Gorilla gorilla gorilla (Western lowland gorilla).